Consider the following 268-residue polypeptide: Microtubule-associated protein RP/EB family member 1 (268 aa).

N-acetylalanine is present on alanine 2. In terms of domain architecture, Calponin-homology (CH) spans 14–116 (NLSRHDMLAW…FVQWFKKFFD (103 aa)). An N6-crotonyllysine modification is found at lysine 66. The residue at position 124 (tyrosine 124) is a Phosphotyrosine. The interaction with MTUS2/TIP150 stretch occupies residues 124–268 (YDPVAARQGQ…GGPQEEQEEY (145 aa)). The segment covering 146–160 (LNKPKKPLSSSSAAP) has biased composition (low complexity). The disordered stretch occupies residues 146–191 (LNKPKKPLSSSSAAPQRPISTQRTAAAPKAGPGVVRKNPGVGNGDD). Phosphoserine occurs at positions 155 and 165. The EB1 C-terminal domain occupies 185-255 (GVGNGDDEAA…LYATDEGFVI (71 aa)). The interval 185–268 (GVGNGDDEAA…GGPQEEQEEY (84 aa)) is interaction with CDK5RAP2. Residues 206–211 (TVEDLE) are interaction with APC. Residues 208–268 (EDLEKERDFY…GGPQEEQEEY (61 aa)) form a DCTN1-binding region. Position 220 is an N6-acetyllysine (lysine 220). The APC-binding stretch occupies residues 220–242 (KLRNIELICQENEGENDPVLQRI). The interval 232–255 (EGENDPVLQRIVDILYATDEGFVI) is interaction with SKA1.

It belongs to the MAPRE family. In terms of assembly, homodimer. Heterodimer with MAPRE3. Interacts with DCTN1, DCTN2, TERF1 and dynein intermediate chain. Interaction with DIAPH1 and DIAPH2. Interacts (via C-terminal residues 206-211) with APC (via C-terminal residues 2674-2845); the interaction inhibits association with and bundling of F-actin. Interacts with CLASP2, DST, KIF2C and STIM1; probably required for their targeting to the growing microtubule plus ends. Interacts with MTUS2; interaction is direct and probably targets MTUS2 to microtubules. Interacts (via C-terminus) with SKA1 (via SXIP motif); the interaction is direct and stabilizes the kinetochore-microtubule attachment of the SKA1 complex. Interacts with APC2. Interacts with CLASP1. Interacts with CDK5RAP2. Interacts with MACF1. Interacts with RABL2/RABL2A; binds preferentially to GTP-bound RABL2. Interacts with KCNAB2. Interacts (via C-terminus) with CLIP1. Interacts with SLAIN2 and SLAIN1. Interacts with KIF18B; this interaction is required for efficient accumulation of KIF18B at microtubule plus ends. Interacts with MISP. Interacts with KNSTRN. Interacts with NCKAP5L. Interacts with CAMSAP2. Interacts with PDE4DIP isoform 13/MMG8/SMYLE; this interaction is required for its recruitment to the Golgi apparatus. Forms a pericentrosomal complex with AKAP9, CDK5RAP2 and PDE4DIP isoform 13/MMG8/SMYLE; within this complex, MAPRE1 binding to CDK5RAP2 may be mediated by PDE4DIP. Interacts with AKNA. Interacts with GAS2L1, GAS2L2, and GAS2L3. Interacts with RARRES1 and AGBL2. Acetylation at Lys-220 by KAT2B/PCAF promotes dynamic kinetochore-microtubule interactions in early mitosis. Post-translationally, crotonylated by KAT5 during mitosis, promoting astral microtubule plasticity and dynamic connection between astral microtubules and the cortex during mitotic chromosome segregation, thereby ensuring accurate spindle positioning in mitosis. Decrotonylated by HDAC3.

The protein resides in the cytoplasm. It is found in the cytoskeleton. Its subcellular location is the microtubule organizing center. It localises to the centrosome. The protein localises to the golgi apparatus. The protein resides in the spindle. It is found in the spindle pole. Plus-end tracking protein (+TIP) that binds to the plus-end of microtubules and regulates the dynamics of the microtubule cytoskeleton. Recruits other +TIP proteins to microtubules by binding to a conserved Ser-X-Leu-Pro (SXLP) motif in their polypeptide chains. Promotes cytoplasmic microtubule nucleation and elongation. Involved in mitotic spindle positioning by stabilizing microtubules and promoting dynamic connection between astral microtubules and the cortex during mitotic chromosome segregation. Assists chromosome alignment in metaphase by recruiting the SKA complex to the spindle and stabilizing its interactions with microtubule bundles (K-fibers). Also acts as a regulator of minus-end microtubule organization: interacts with the complex formed by AKAP9 and PDE4DIP, leading to recruit CAMSAP2 to the Golgi apparatus, thereby tethering non-centrosomal minus-end microtubules to the Golgi, an important step for polarized cell movement. Promotes elongation of CAMSAP2-decorated microtubule stretches on the minus-end of microtubules. Acts as a regulator of autophagosome transport via interaction with CAMSAP2. Functions downstream of Rho GTPases and DIAPH1 in stable microtubule formation. May play a role in cell migration. This Pongo abelii (Sumatran orangutan) protein is Microtubule-associated protein RP/EB family member 1 (MAPRE1).